Reading from the N-terminus, the 1355-residue chain is Collagen alpha-2(I) chain (1355 aa).

The first 22 residues, 1–22, serve as a signal peptide directing secretion; that stretch reads MLSFVDLRSVLLLAVTLYLVTC. Gln23 bears the Pyrrolidone carboxylic acid mark. Positions 23 to 71 are cleaved as a propeptide — N-terminal propeptide; sequence QEVRRGPRGDKGPPGEQGPPGIPGRDGEDGLPGLPGPPGVPGLGGNFAA. Residues 26 to 35 are compositionally biased toward basic and acidic residues; it reads RRGPRGDKGP. The disordered stretch occupies residues 26–1111; it reads RRGPRGDKGP…GDGGEYYRAD (1086 aa). Pyrrolidone carboxylic acid is present on Gln72. Residue Lys77 is modified to Allysine. Over residues 99–108 the composition is skewed to low complexity; it reads PGSQGFQGLP. Residues 132–146 show a composition bias toward basic and acidic residues; the sequence is AGEDGHPGKSGRPGE. Lys168 carries the post-translational modification 5-hydroxylysine; alternate. A glycan (O-linked (Gal...) hydroxylysine; alternate) is linked at Lys168. Residues 218–267 show a composition bias toward low complexity; the sequence is PAGSAGSRGSDGSSGPVGPAGPIGSAGAPGLPGAPGAKGELGPAGNNGPT. Residues 276–290 show a composition bias toward pro residues; that stretch reads PGPPGSLGPAGPPGN. Residues 291–303 are compositionally biased toward low complexity; it reads PGTNGVNGAKGTA. Residues 304 to 322 show a composition bias toward gly residues; that stretch reads GLPGVGGAPGLPGGRGIPG. A compositionally biased stretch (low complexity) spans 327–336; the sequence is AGPSGARGLA. Composition is skewed to gly residues over residues 340-349 and 403-412; these read GIAGGKGDTG and GRAGGIGPAG. Low complexity-rich tracts occupy residues 413 to 426 and 465 to 495; these read SRGS…RGPN and EGRS…NGEP. Composition is skewed to gly residues over residues 523 to 532 and 586 to 595; these read GPAGLGGATG and GESGGAGPHG. The segment covering 596–618 has biased composition (low complexity); it reads PSGSRGPSGAPGPDGQKGEPGAA. Gly residues predominate over residues 619 to 628; it reads GLNGGLGPSG. Composition is skewed to low complexity over residues 659-675, 687-701, and 708-726; these read NPGR…AGAP, SGPA…PRGA, and AGPA…AGHT. Residues 728–738 are compositionally biased toward basic and acidic residues; sequence AKGDRGAKGPK. 2 stretches are compositionally biased toward low complexity: residues 741–767 and 776–788; these read AGSP…STGA and ATGF…RAGA. A compositionally biased stretch (basic and acidic residues) spans 804–813; that stretch reads PGKDGSRGPR. A compositionally biased stretch (low complexity) spans 852–869; the sequence is AGPSGVLGARGILGLPGT. The segment covering 874–883 has biased composition (gly residues); it reads GLPGGPGSNG. 2 stretches are compositionally biased toward low complexity: residues 884-912 and 947-966; these read EPGP…VGHS and PSGL…AGKS. The span at 967–976 shows a compositional bias: gly residues; it reads GNRGEGGPSG. The span at 996–1014 shows a compositional bias: basic and acidic residues; it reads RGDKGEAGERGARGLDGRK. The segment covering 1019–1041 has biased composition (low complexity); it reads LSGLPGPSGTPGETGPSGSVGPV. Positions 1080-1091 are enriched in pro residues; it reads AGPPGPPGPPGH. The span at 1093-1105 shows a compositional bias: gly residues; the sequence is GPSGGGYDGGDGG. The propeptide at 1111 to 1355 is C-terminal propeptide; the sequence is DQPERKPKDY…GFEIGPVCFK (245 aa). One can recognise a Fibrillar collagen NC1 domain in the interval 1120–1355; that stretch reads YEVDATLKSL…GFEIGPVCFK (236 aa). 3 cysteine pairs are disulfide-bonded: Cys1150-Cys1182, Cys1190-Cys1353, and Cys1261-Cys1306. Positions 1168, 1170, 1171, 1173, and 1176 each coordinate Ca(2+). N-linked (GlcNAc...) asparagine glycans are attached at residues Asn1206 and Asn1256.

The protein belongs to the fibrillar collagen family. Trimers of one alpha 2(I) and two alpha 1(I) chains. Prolines at the third position of the tripeptide repeating unit (G-X-Y) are hydroxylated in some or all of the chains. As to expression, forms the fibrils of tendon, ligaments and bones. In bones the fibrils are mineralized with calcium hydroxyapatite.

Its subcellular location is the secreted. The protein resides in the extracellular space. The protein localises to the extracellular matrix. In terms of biological role, type I collagen is a member of group I collagen (fibrillar forming collagen). This Aquarana catesbeiana (American bullfrog) protein is Collagen alpha-2(I) chain (COL1A2).